Consider the following 337-residue polypeptide: Undecaprenyl-phosphate 4-deoxy-4-formamido-L-arabinose transferase (337 aa).

2 helical membrane-spanning segments follow: residues 235 to 255 (LSIIGFSMALLGVLFAALLII) and 270 to 290 (FVLFAVLFVFTGGQFIGMGLL).

Belongs to the glycosyltransferase 2 family.

It is found in the cell inner membrane. The catalysed reaction is UDP-4-deoxy-4-formamido-beta-L-arabinose + di-trans,octa-cis-undecaprenyl phosphate = 4-deoxy-4-formamido-alpha-L-arabinopyranosyl di-trans,octa-cis-undecaprenyl phosphate + UDP. It functions in the pathway glycolipid biosynthesis; 4-amino-4-deoxy-alpha-L-arabinose undecaprenyl phosphate biosynthesis; 4-amino-4-deoxy-alpha-L-arabinose undecaprenyl phosphate from UDP-4-deoxy-4-formamido-beta-L-arabinose and undecaprenyl phosphate: step 1/2. Its pathway is bacterial outer membrane biogenesis; lipopolysaccharide biosynthesis. Functionally, catalyzes the transfer of 4-deoxy-4-formamido-L-arabinose from UDP to undecaprenyl phosphate. The modified arabinose is attached to lipid A and is required for resistance to polymyxin and cationic antimicrobial peptides. The sequence is that of Undecaprenyl-phosphate 4-deoxy-4-formamido-L-arabinose transferase from Pseudomonas savastanoi pv. phaseolicola (strain 1448A / Race 6) (Pseudomonas syringae pv. phaseolicola (strain 1448A / Race 6)).